The chain runs to 457 residues: Multidrug resistance protein MdtK (457 aa).

12 helical membrane-spanning segments follow: residues 11–31 (LLALAIPVILAQVAQTAMGFV), 53–73 (IWLPAILFGHGLLLALTPVVA), 93–113 (WLAGFVSVLIMVVLWNAGYII), 127–147 (AVGYLRALLWGAPGYLFFQVA), 160–180 (GMVMGFIGLLVNIPVNYIFIY), 191–211 (VGCGVATASVYWVMFASMLWW), 243–263 (LPIALALFFEVTLFAVVALLV), 276–296 (IALNFSSLMFVLPLSLAAAVT), 316–336 (RTGVGVGVCLAVFTAIFTVLM), 350–370 (VVLLASHLMLLAAIYQISDSI), 387–407 (IFFITFTAYWVLGLPSGYLLA), and 418–438 (PAGFWCGFIIGLTSAAIMMML).

This sequence belongs to the multi antimicrobial extrusion (MATE) (TC 2.A.66.1) family. MdtK subfamily.

It localises to the cell inner membrane. Its function is as follows. Multidrug efflux pump that functions probably as a Na(+)/drug antiporter. The sequence is that of Multidrug resistance protein MdtK from Klebsiella pneumoniae (strain 342).